We begin with the raw amino-acid sequence, 465 residues long: FAD-dependent oxidoreductase pigF (465 aa).

The N-terminal stretch at 1-17 (MMLLTLLILSSVGLAAA) is a signal peptide. 4 N-linked (GlcNAc...) asparagine glycosylation sites follow: N95, N138, N260, and N327. D444 is lipidated: GPI-anchor amidated aspartate. Residues 445-465 (SASGIWNLTNAVVLPGLLTGL) constitute a propeptide, removed in mature form. A glycan (N-linked (GlcNAc...) asparagine) is linked at N451.

It belongs to the beta-cyclopiazonate dehydrogenase family. It depends on FAD as a cofactor.

Its subcellular location is the cell membrane. Its pathway is secondary metabolite biosynthesis. Functionally, FAD-dependent oxidoreductase; part of the gene cluster that mediates the biosynthesis of azaphilone pigments (MonAzPs), a complex mixture of compounds with a common azaphilone skeleton very widely used as food colorants. Within the pathway, pigF desaturates C6(7) to afford the orange and red pigments from yellow pigments. The first step of the pathway is performed by the nrPKS pigA that forms the hexaketide precursor from successive condensations of five malonyl-CoA units, with a simple acetyl-CoA starter unit. The role of esterase pigG is not clear, but it may play at most a supplementary role in the formation of the benzaldehyde produced by the pigA nrPKS. This very reactive benzaldehyde is intercepted by the pigC ketoreductase that to provide the first stable enzyme-free MonAzPs intermediate, 6-(4-hydroxy-2-oxopentyl)-3-methyl-2,4-dioxocyclohexane carbaldehyde, also known as M7PKS-1. The FAD-dependent monooxygenase pigN hydroxylates M7PKS-1 at C-4, which triggers the formation of the pyran ring. PigJ, pigK and pigD are involved in the acetylation of the pyran ring. PigJ and pigK form the two subunits of a dedicated fungal FAS that produces the side chain fatty acyl moiety of MonAzPs and pigD transfers the fatty acyl chain to the C-4 alcohol. PigM and pigO are involved in the elimination of the omega-1 alcohol. PigM acts as an O-acetyltransferase that synthesizes the putative O-11 acetyl intermediate whereas pigO eliminates acetic acid to yield an intermediate with a C10(11) double bond. The dehydration of the C-11 alcohol followed by the reduction of the C6(7) double bond by the NAD(P)H-dependent oxidoreductase pigE increases the electrophilicity of the C-5 ketone of the resulting acyl benzopyran. This in turn sets up the C-5 ketone for an intramolecular Knoevenagel aldol condensation with the C-20 enol of the side chain. This condensation affords the characteristic linear tricyclic carbon skeletons of the yellow pigments that serve as the common precursors for the classical yellow pigments monascin and ankaflavin, orange pigments rubopunctatin and monascorubrin, and red pigments ribropunctamine and monascorubramine. The FAD-dependent oxidoreductase pigF is especially invoved in the biosynthesis of orange and red pigments via desaturation of C6(7). This chain is FAD-dependent oxidoreductase pigF, found in Monascus ruber (Mold).